A 728-amino-acid polypeptide reads, in one-letter code: Cytosolic endo-beta-N-acetylglucosaminidase (728 aa).

The region spanning 287–381 (QNRVFFDACD…NFLLNEDKFW (95 aa)) is the BRCT domain.

Belongs to the glycosyl hydrolase 85 family.

It localises to the cytoplasm. Its subcellular location is the cytosol. It catalyses the reaction an N(4)-(oligosaccharide-(1-&gt;3)-[oligosaccharide-(1-&gt;6)]-beta-D-Man-(1-&gt;4)-beta-D-GlcNAc-(1-&gt;4)-alpha-D-GlcNAc)-L-asparaginyl-[protein] + H2O = an oligosaccharide-(1-&gt;3)-[oligosaccharide-(1-&gt;6)]-beta-D-Man-(1-&gt;4)-D-GlcNAc + N(4)-(N-acetyl-beta-D-glucosaminyl)-L-asparaginyl-[protein]. Functionally, endoglycosidase that releases N-glycans from glycoproteins by cleaving the beta-1,4-glycosidic bond in the N,N'-diacetylchitobiose core. Involved in the processing of free oligosaccharides in the cytosol. This is Cytosolic endo-beta-N-acetylglucosaminidase (ENGASE) from Gallus gallus (Chicken).